Reading from the N-terminus, the 240-residue chain is T-cell antigen CD7 (240 aa).

The signal sequence occupies residues M1–A25. In terms of domain architecture, Ig-like spans A26 to L130. The Extracellular segment spans residues A26–P180. Cystine bridges form between C35-C142 and C48-C114. N45 and N96 each carry an N-linked (GlcNAc...) asparagine glycan. A disordered region spans residues H140–D172. A run of 4 repeats spans residues A145–P153, A154–P162, D163–P171, and D172–P180. The interval A145–P180 is 4 X 9 AA tandem repeats, potential spacer function. The chain crosses the membrane as a helical span at residues A181 to A201. C198 carries the S-palmitoyl cysteine lipid modification. The Cytoplasmic segment spans residues R202–Q240.

As to quaternary structure, interacts with SECTM1. Expressed on T-cells and natural killer (NK) cells and their precursors.

The protein localises to the membrane. Functionally, transmembrane glycoprotein expressed by T-cells and natural killer (NK) cells and their precursors. Plays a costimulatory role in T-cell activation upon binding to its ligand K12/SECTM1. In turn, mediates the production of cytokines such as IL-2. On resting NK-cells, CD7 activation results in a significant induction of interferon-gamma levels. The chain is T-cell antigen CD7 (CD7) from Homo sapiens (Human).